The sequence spans 519 residues: Na(+)/H(+) exchange regulatory cofactor NHE-RF3 (519 aa).

Residues 9-90 (ECKLSKQEGQ…SVTLLVLDGD (82 aa)) enclose the PDZ 1 domain. Phosphoserine occurs at positions 108, 148, 192, 250, 334, and 348. PDZ domains lie at 128 to 215 (EPCA…VDKE) and 243 to 323 (VVVI…LDKE). The interval 348 to 374 (SVKEGPAPIPAPLEATGSEPTEDAEGH) is disordered. The PDZ 4 domain occupies 378–458 (LCRLLKEDDS…HVTLLVCGKM (81 aa)). Residues T451 and T488 each carry the phosphothreonine modification. Residues 479–519 (VAGPDEKGETSAESEHDAHPAKDRTLSTASHSSSNSEDTEM) form a disordered region. Residues 482-503 (PDEKGETSAESEHDAHPAKDRT) are compositionally biased toward basic and acidic residues. Phosphoserine occurs at positions 489 and 492. Residue T503 is modified to Phosphothreonine. Residues 505–519 (STASHSSSNSEDTEM) are compositionally biased toward low complexity. Residues S508, S510, S511, S512, and S514 each carry the phosphoserine modification.

This sequence belongs to the NHER family. As to quaternary structure, interacts with PDZK1IP1 and ABCC2. Binds to the C-terminal region of SLC26A3. Interacts (via C-terminal PDZ domain) with SLC26A6 (via C-terminal domain). Interacts (via C-terminal PDZ domain) with SLC9A3 (via C-terminal domain). Component of a complex, composed of PDZK1, SYNGAP1, KLHL17 and NMDA receptors. Interacts (via PDZ1 domain) directly with KLHL17; the interaction is important for integrity of actin cytoskeleton structures in neurons. Forms a heterodimeric complex with NHERF1. Interacts with AKAP2, BCR, CFTR, SLCO1A1, SLC22A12, SLC22A4, SLC22A5, SLC26A6, NHERF2 and SLC17A1. Interacts (via the first PDZ domain) with PTGIR (via non-isoprenylated C-terminus). Interacts (via PDZ domains 1 and 3) with SCARB1 (C-terminal domain). Interacts (via PDZ domains 1 and 3) with SLC5A8 (via PDZ-binding motif); interaction increases nicotinate transport activity of SLC5A8. Expressed in kidney, liver, small intestine. brain, lung, and testis (at protein level).

Its subcellular location is the membrane. It localises to the cell membrane. Functionally, a scaffold protein that connects plasma membrane proteins and regulatory components, regulating their surface expression in epithelial cells apical domains. May be involved in the coordination of a diverse range of regulatory processes for ion transport and second messenger cascades. In complex with NHERF1, may cluster proteins that are functionally dependent in a mutual fashion and modulate the trafficking and the activity of the associated membrane proteins. May play a role in the cellular mechanisms associated with multidrug resistance through its interaction with ABCC2 and PDZK1IP1. May potentiate the CFTR chloride channel activity. Required for normal cell-surface expression of SCARB1. Plays a role in maintaining normal plasma cholesterol levels via its effects on SCARB1. Plays a role in the normal localization and function of the chloride-anion exchanger SLC26A6 to the plasma membrane in the brush border of the proximal tubule of the kidney. May be involved in the regulation of proximal tubular Na(+)-dependent inorganic phosphate cotransport therefore playing an important role in tubule function. This Mus musculus (Mouse) protein is Na(+)/H(+) exchange regulatory cofactor NHE-RF3 (Pdzk1).